The primary structure comprises 96 residues: MKPYLLEHEELKELSAKIGGWRIMTNHIEREFNFSNFVEAFSFMTKIALICEKHNHHPNWENVYSKVIIKLSTHDLGGITNLDQTIASEINDIFEK.

It belongs to the pterin-4-alpha-carbinolamine dehydratase family.

It catalyses the reaction (4aS,6R)-4a-hydroxy-L-erythro-5,6,7,8-tetrahydrobiopterin = (6R)-L-erythro-6,7-dihydrobiopterin + H2O. This is Putative pterin-4-alpha-carbinolamine dehydratase from Prochlorococcus marinus subsp. pastoris (strain CCMP1986 / NIES-2087 / MED4).